Here is a 190-residue protein sequence, read N- to C-terminus: Nodulation protein L (190 aa).

It belongs to the transferase hexapeptide repeat family.

Functionally, acetyltransferase implicated in the O-acetylation of Nod factors. The polypeptide is Nodulation protein L (nodL) (Rhizobium leguminosarum bv. viciae).